Reading from the N-terminus, the 608-residue chain is Coilin (608 aa).

The disordered stretch occupies residues 134–272 (KETGGYESES…RKKAKRQWLR (139 aa)). The segment covering 141 to 155 (SESEEDELEEEAEEF) has biased composition (acidic residues). Positions 161–179 (ASKKRKTSSKNQSTKRKKC) are enriched in basic residues. Positions 163-170 (KKRKTSSK) match the Nuclear localization signal 1 motif. Ser-187 carries the phosphoserine modification. Residues 211-228 (DVQSANNDEQNNDSTKPM) show a composition bias toward polar residues. The span at 235–245 (SQQEESKEHND) shows a compositional bias: basic and acidic residues. The short motif at 253-260 (TKKTPSRS) is the Nuclear localization signal 2 element. The span at 256 to 269 (TPSRSARRKKAKRQ) shows a compositional bias: basic residues. Residues 410–510 (YEQLVAYTGS…LLDVRSVKTS (101 aa)) form the Tudor; atypical domain. Residues 513–585 (DSAEVAKSAL…KKGSSSGGSW (73 aa)) are disordered. Positions 558-585 (EALSAKKAALSQANNGWNKKGSSSGGSW) are enriched in low complexity.

This sequence belongs to the coilin family. Homooligomer. Interaction with RNA results in multimerization due to structural alteration in the NOD domain.

Its subcellular location is the nucleus. The protein resides in the cajal body. Its function is as follows. Probable component of nuclear coiled bodies, also known as Cajal bodies or CBs, which are involved in the modification and assembly of nucleoplasmic snRNPs. Required for CBs formation. Binds snRNAs and non-specific artificial RNA via the N-terminal part of the NOD domain and via the NLS2 region (212-282) of the IDD domain. The two sites are able to function independently and provide effective RNA-binding in a non-cooperative manner. The protein is Coilin of Arabidopsis thaliana (Mouse-ear cress).